The following is a 276-amino-acid chain: Protease HtpX homolog (276 aa).

Residues 14 to 34 (IVLFALIGQALGGTGGMLLAF) form a helical membrane-spanning segment. H130 is a binding site for Zn(2+). The active site involves E131. Zn(2+) is bound at residue H134. A run of 2 helical transmembrane segments spans residues 145–165 (VAAT…FFGG) and 171–191 (LVSL…QSAI). E196 contacts Zn(2+).

It belongs to the peptidase M48B family. Zn(2+) serves as cofactor.

The protein localises to the cell inner membrane. The protein is Protease HtpX homolog of Salinibacter ruber (strain DSM 13855 / M31).